We begin with the raw amino-acid sequence, 5381 residues long: Protein purity of essence (5381 aa).

Disordered regions lie at residues 140-174, 339-364, 599-621, 683-709, 1162-1212, and 1632-1659; these read KHPE…PKLE, QQQT…TSKD, SPET…QKSA, RNDS…SSGS, SGGD…STET, and QAAQ…QSER. The span at 339-350 shows a compositional bias: low complexity; that stretch reads QQQTAAAASTSQ. Composition is skewed to low complexity over residues 690–709 and 1167–1176; these read SPPS…SSGS and SSCTSAASSS. Residues 1632-1646 show a composition bias toward polar residues; the sequence is QAAQPNPSEESSQAC. Positions 1647-1658 are enriched in basic and acidic residues; it reads DHSEGGEQRQSE. The segment at 1815-1884 adopts a UBR-type zinc-finger fold; sequence KLCTFSQTQK…EDGSCQALSR (70 aa). Disordered regions lie at residues 1917–1939, 2443–2479, 2632–2652, 3037–3143, 3537–3562, and 4247–4280; these read KRSN…KDSI, KNTT…KQLT, PDDS…TATQ, VSAG…DNNE, KQQQ…DREK, and HHQQ…KEAA. Composition is skewed to polar residues over residues 1920–1930, 2470–2479, 2643–2652, and 3048–3058; these read NTAPGATQQQH, SSQQHQKQLT, SGPTPVTATQ, and NVATDGSTLRT. Positions 3065–3075 are enriched in gly residues; the sequence is GSGGSESGGSG. Polar residues predominate over residues 3084-3104; it reads ARSSNFGDHPNTTPPRQSCSS. Residues 3119–3132 show a composition bias toward gly residues; sequence SGSGGSASVPGGGL. Residues 4904-5374 form a UBR4 E3 catalytic module region; it reads PSLKYILRFL…SFIEDLLASL (471 aa). The segment at 5022–5136 adopts a HemiRING-type zinc-finger fold; the sequence is GLTCFICREG…SSYMQESTQR (115 aa). Positions 5025, 5028, 5074, and 5077 each coordinate Zn(2+). The UZI domain occupies 5139–5374; the sequence is ISYTSSIHDL…SFIEDLLASL (236 aa).

The protein belongs to the UBR4 family.

Its function is as follows. Has a role in growth of the perineurial glial layer of the larval peripheral nerve. May have a role in male fertility and eye development or function. May bind calmodulin. This is Protein purity of essence from Drosophila pseudoobscura pseudoobscura (Fruit fly).